The primary structure comprises 253 residues: CD151 antigen (253 aa).

The Cytoplasmic segment spans residues 1-18 (MGEFNEKKATCGTVCLKY). 2 S-palmitoyl cysteine lipidation sites follow: Cys-11 and Cys-15. The helical transmembrane segment at 19–39 (LLFTYNCCFWLAGLAVMAVGI) threads the bilayer. At 40–57 (WTLALKSDYISLLASSTY) the chain is on the extracellular side. A helical transmembrane segment spans residues 58 to 78 (LATAYILVVAGVVVMVTGVLG). The Cytoplasmic portion of the chain corresponds to 79–91 (CCATFKERRNLLR). Residues 92-112 (LYFILLLIIFLLEIIAGILAY) form a helical membrane-spanning segment. Residues 113-221 (VYYQQLNTEL…LESFIQEHLR (109 aa)) are Extracellular-facing. Residue Asn-159 is glycosylated (N-linked (GlcNAc...) asparagine). A helical transmembrane segment spans residues 222–242 (VIGAVGIGIACVQVFGMIFTC). S-palmitoyl cysteine attachment occurs at residues Cys-242 and Cys-243. Residues 243-253 (CLYRSLKLEHY) are Cytoplasmic-facing.

Belongs to the tetraspanin (TM4SF) family. As to quaternary structure, interacts with integrins ITGA3:ITGB1, ITGA5:ITGB1, ITGA3:ITGB1 and ITGA6:ITGB4 and with CD9 and CD181. Interacts (via the second extracellular domain) with integrin ITGAV:ITGB3. Interacts with ITGA3; this interaction modulates ITGA3 glycosylation pattern. Interacts with F11R. Interacts with RAC1 and CDC42; these interactions mediate physical association of RAC1 and CDC42 with integrin adhesion receptor complexes. Post-translationally, palmitoylated. Palmitoylation by ZDHHC2 regulates CD151 expression, association with other tetraspanin family proteins and function in cell adhesion. Ubiquitinated by RNF128 on lysine residues present in the tetraspanin amino terminus via 'Lys-48'-linked ubiquitin leading to proteasomal degradation.

It is found in the cell membrane. Structural component of specialized membrane microdomains known as tetraspanin-enriched microdomains (TERMs), which act as platforms for receptor clustering and signaling. Plays a role in various cellular and molecular mechanism through its association with both integrin and non-integrin proteins. These interactions facilitate critical cellular functions, including cell-to-cell communication, wound healing, platelet aggregation, trafficking, cell motility, and angiogenesis. Via interaction with JAM-A/F11R and integrin ITGA3:ITGB1, promotes the recruitment of signaling molecules such as RAC1, CDC42 and RhoGTPases to facilitate the polarization of epithelial cells and the reorganization of the actin cytoskeleton, which are critical steps in cell migration process. Regulates the glycosylation pattern of ITGA3:ITGB1 thereby modulating its activity. Plays an essential role in the maintenance of central laminin-binding integrin ITGA6:ITGB4-containing adhesion complexes. Essential for the proper assembly of the glomerular and tubular basement membranes in kidney. Contributes to T-cell activation by modulating integrin signaling leading to activation of downstream targets PTK2 and MAPK1/MAPK3. The polypeptide is CD151 antigen (Cd151) (Rattus norvegicus (Rat)).